We begin with the raw amino-acid sequence, 239 residues long: Transcriptional regulatory protein RstA (239 aa).

Residues 3–116 (TIVFVEDDAE…VLLARLRLHL (114 aa)) enclose the Response regulatory domain. D52 carries the 4-aspartylphosphate modification. Residues 136–235 (YKALHFGTLT…VRNKGYLFAP (100 aa)) constitute a DNA-binding region (ompR/PhoB-type).

Phosphorylated by RstB.

The protein localises to the cytoplasm. Its function is as follows. Member of the two-component regulatory system RstB/RstA. This Escherichia coli (strain K12) protein is Transcriptional regulatory protein RstA (rstA).